The following is a 954-amino-acid chain: Mast/stem cell growth factor receptor-related protein Kit (954 aa).

An N-terminal signal peptide occupies residues 1 to 19 (MSWTYLLMLLFLLPYTGDA). The Extracellular segment spans residues 20–512 (VPKINDGEDR…KLRTHTLFTP (493 aa)). 3 consecutive Ig-like C2-type domains span residues 21–109 (PKIN…LFVK), 118–200 (IPFI…IHVK), and 207–299 (PTVF…LDVI). An intrachain disulfide couples Cys42 to Cys93. N-linked (GlcNAc...) asparagine glycans are attached at residues Asn70, Asn101, Asn155, Asn184, Asn263, Asn291, Asn305, Asn311, Asn343, Asn348, Asn458, and Asn478. 2 disulfide bridges follow: Cys133–Cys181 and Cys147–Cys178. Cys228 and Cys281 are oxidised to a cystine. Ig-like C2-type domains lie at 308–401 (VLEN…IQVK) and 404–499 (PEIL…FSFA). The cysteines at positions 419 and 483 are disulfide-linked. Residues 513–533 (LLIGFIAAAGLMCIAVAVLMY) form a helical membrane-spanning segment. The Cytoplasmic portion of the chain corresponds to 534 to 954 (KYLQKPKYEI…SQPLLTNSDR (421 aa)). Mg(2+) is bound at residue Tyr556. Phosphotyrosine; by autocatalysis is present on residues Tyr556 and Tyr558. The Protein kinase domain occupies 577–912 (LCFGKILGAG…QIVQMVEQQL (336 aa)). Residues 584–591 (GAGAFGKV), Lys611, and 659–665 (EYCCYGD) each bind ATP. Tyr691 and Tyr708 each carry phosphotyrosine; by autocatalysis. The Proton acceptor role is filled by Asp776. Arg780 contacts ATP. The Mg(2+) site is built by Asn781 and Asp794. Position 807 is a phosphotyrosine; by autocatalysis (Tyr807).

The protein belongs to the protein kinase superfamily. Tyr protein kinase family. CSF-1/PDGF receptor subfamily. In terms of processing, ubiquitinated. Rapidly ubiquitinated after autophosphorylation induced by kitlg/scf binding, leading to internalization and degradation. Autophosphorylated on tyrosine residues. Phosphorylated tyrosine residues are important for interaction with specific binding partners. In terms of tissue distribution, expressed in a migratory stem cell population.

It localises to the cell membrane. It carries out the reaction L-tyrosyl-[protein] + ATP = O-phospho-L-tyrosyl-[protein] + ADP + H(+). Its function is as follows. Tyrosine-protein kinase that acts as a cell-surface receptor for the cytokine kitlg/scf and plays an essential role in the regulation of cell survival and proliferation, hematopoiesis, stem cell maintenance, gametogenesis, mast cell development, migration and function, and in melanogenesis. The sequence is that of Mast/stem cell growth factor receptor-related protein Kit (kit) from Xenopus laevis (African clawed frog).